The primary structure comprises 483 residues: Glutamyl-tRNA(Gln) amidotransferase subunit A (483 aa).

Active-site charge relay system residues include Lys-76 and Ser-151. Ser-175 acts as the Acyl-ester intermediate in catalysis.

This sequence belongs to the amidase family. GatA subfamily. As to quaternary structure, heterotrimer of A, B and C subunits.

It carries out the reaction L-glutamyl-tRNA(Gln) + L-glutamine + ATP + H2O = L-glutaminyl-tRNA(Gln) + L-glutamate + ADP + phosphate + H(+). Allows the formation of correctly charged Gln-tRNA(Gln) through the transamidation of misacylated Glu-tRNA(Gln) in organisms which lack glutaminyl-tRNA synthetase. The reaction takes place in the presence of glutamine and ATP through an activated gamma-phospho-Glu-tRNA(Gln). The chain is Glutamyl-tRNA(Gln) amidotransferase subunit A from Pseudomonas fluorescens (strain SBW25).